A 273-amino-acid polypeptide reads, in one-letter code: Ethanolamine ammonia-lyase small subunit (273 aa).

Adenosylcob(III)alamin-binding residues include valine 164, glutamate 185, and cysteine 214.

This sequence belongs to the EutC family. As to quaternary structure, the basic unit is a heterodimer which dimerizes to form tetramers. The heterotetramers trimerize; 6 large subunits form a core ring with 6 small subunits projecting outwards. Adenosylcob(III)alamin serves as cofactor.

Its subcellular location is the bacterial microcompartment. It carries out the reaction ethanolamine = acetaldehyde + NH4(+). Its pathway is amine and polyamine degradation; ethanolamine degradation. Functionally, catalyzes the deamination of various vicinal amino-alcohols to oxo compounds. Allows this organism to utilize ethanolamine as the sole source of nitrogen and carbon in the presence of external vitamin B12. This is Ethanolamine ammonia-lyase small subunit from Pseudomonas aeruginosa (strain LESB58).